The chain runs to 133 residues: Fluoride-specific ion channel FluC 3 (133 aa).

3 helical membrane passes run 7–27, 37–57, and 60–80; these read ILVL…SGYV, WGTF…AGLG, and LGAI…LLGG. Glycine 79 and threonine 82 together coordinate Na(+). The helical transmembrane segment at 107–127 threads the bilayer; it reads IVASALLCVLAVAAGYGGIMW.

The protein belongs to the fluoride channel Fluc/FEX (TC 1.A.43) family.

It localises to the cell inner membrane. It carries out the reaction fluoride(in) = fluoride(out). With respect to regulation, na(+) is not transported, but it plays an essential structural role and its presence is essential for fluoride channel function. In terms of biological role, fluoride-specific ion channel. Important for reducing fluoride concentration in the cell, thus reducing its toxicity. The sequence is that of Fluoride-specific ion channel FluC 3 from Brucella suis biovar 1 (strain 1330).